A 209-amino-acid polypeptide reads, in one-letter code: Small ribosomal subunit protein uS5 (209 aa).

One can recognise an S5 DRBM domain in the interval 48–111 (LEDEVLDINM…DAAKLNITYI (64 aa)).

The protein belongs to the universal ribosomal protein uS5 family. As to quaternary structure, part of the 30S ribosomal subunit. Contacts protein S4.

Its function is as follows. With S4 and S12 plays an important role in translational accuracy. This chain is Small ribosomal subunit protein uS5, found in Methanosarcina mazei (strain ATCC BAA-159 / DSM 3647 / Goe1 / Go1 / JCM 11833 / OCM 88) (Methanosarcina frisia).